A 467-amino-acid polypeptide reads, in one-letter code: MNQQDIEQVVKAVLLKMKDSSQPASTVHEMGVFASLDDAVAAAKRAQQGLKSVAMRQLAIHAIREAGEKHARELAELAVSETGMGRVDDKFAKNVAQARGTPGVECLSPQVLTGDNGLTLIENAPWGVVASVTPSTNPAATVINNAISLIAAGNSVVFAPHPAAKKVSQRAITLLNQAVVAAGGPENLLVTVANPDIETAQRLFKYPGIGLLVVTGGEAVVDAARKHTNKRLIAAGAGNPPVVVDETADLPRAAQSIVKGASFDNNIICADEKVLIVVDSVADELMRLMEGQHAVKLTAAQAEQLQPVLLKNIDERGKGTVSRDWVGRDAGKIAAAIGLNVPDQTRLLFVETPANHPFAVTEMMMPVLPVVRVANVEEAIALAVQLEGGCHHTAAMHSRNIDNMNQMANAIDTSIFVKNGPCIAGLGLGGEGWTTMTITTPTGEGVTSARTFVRLRRCVLVDAFRIV.

The interval 1–19 (MNQQDIEQVVKAVLLKMKD) is targets protein to the BMC.

The protein belongs to the EutE/PduP family. Interacts with EutS, which targets it to the interior of the BMC.

It is found in the bacterial microcompartment. The enzyme catalyses acetaldehyde + NAD(+) + CoA = acetyl-CoA + NADH + H(+). Its pathway is amine and polyamine degradation; ethanolamine degradation. Acts as the second step in ethanolamine degradation by converting acetaldehyde into acetyl-CoA. Has a very strong preference for NAD(+) over NADP(+) in both catalytic directions. May play a role in bacterial microcompartment (BMC) assembly or maintenance. Directly targeted to the BMC. Functionally, expression of the eut operon allows this bacteria to use ethanolamine (EA) as a carbon, nitrogen and energy source. It relies on cobalamin (vitamin B12) both as a cofactor for the ethanolamine ammonia-lyase (EAL) activity and to induce the operon. EA enhances bacterial survival in macrophages in a concentration-dependent manner, suggesting it is an important nutrient during infection. This is Acetaldehyde dehydrogenase (acetylating) EutE from Salmonella typhimurium (strain LT2 / SGSC1412 / ATCC 700720).